The sequence spans 503 residues: Probable 2-isopropylmalate synthase (503 aa).

The region spanning Ile8–Phe259 is the Pyruvate carboxyltransferase domain. A divalent metal cation-binding residues include Asp17, His197, His199, and Asn233.

It belongs to the alpha-IPM synthase/homocitrate synthase family. In terms of assembly, homodimer. A divalent metal cation serves as cofactor.

The enzyme catalyses 3-methyl-2-oxobutanoate + acetyl-CoA + H2O = (2S)-2-isopropylmalate + CoA + H(+). It participates in amino-acid biosynthesis; L-leucine biosynthesis; L-leucine from 3-methyl-2-oxobutanoate: step 1/4. Catalyzes the condensation of the acetyl group of acetyl-CoA with 3-methyl-2-oxobutanoate (2-oxoisovalerate) to form 3-carboxy-3-hydroxy-4-methylpentanoate (2-isopropylmalate). This Archaeoglobus fulgidus (strain ATCC 49558 / DSM 4304 / JCM 9628 / NBRC 100126 / VC-16) protein is Probable 2-isopropylmalate synthase (leuA).